The following is a 67-amino-acid chain: Conotoxin TsMMSK-011 (67 aa).

Residues Met1–Ala20 form the signal peptide. Residues Val21–Val50 constitute a propeptide that is removed on maturation. 3 disulfides stabilise this stretch: Cys53–Cys65, Cys54–Cys61, and Cys58–Cys64. A 4-hydroxyproline modification is found at Pro63.

This sequence belongs to the conotoxin M superfamily. Expressed by the venom duct.

It localises to the secreted. The sequence is that of Conotoxin TsMMSK-011 from Conus tessulatus (Tessellate cone).